We begin with the raw amino-acid sequence, 719 residues long: DNA ligase (719 aa).

Residues D42–D46, S92–L93, and E126 each bind NAD(+). K128 (N6-AMP-lysine intermediate) is an active-site residue. NAD(+) is bound by residues R149, E185, K301, and K325. Zn(2+) contacts are provided by C430, C433, C448, and C454. One can recognise a BRCT domain in the interval A640 to D719.

It belongs to the NAD-dependent DNA ligase family. LigA subfamily. Mg(2+) serves as cofactor. It depends on Mn(2+) as a cofactor.

The catalysed reaction is NAD(+) + (deoxyribonucleotide)n-3'-hydroxyl + 5'-phospho-(deoxyribonucleotide)m = (deoxyribonucleotide)n+m + AMP + beta-nicotinamide D-nucleotide.. Its function is as follows. DNA ligase that catalyzes the formation of phosphodiester linkages between 5'-phosphoryl and 3'-hydroxyl groups in double-stranded DNA using NAD as a coenzyme and as the energy source for the reaction. It is essential for DNA replication and repair of damaged DNA. The protein is DNA ligase of Brucella melitensis biotype 1 (strain ATCC 23456 / CCUG 17765 / NCTC 10094 / 16M).